The following is a 346-amino-acid chain: Alkanal monooxygenase alpha chain (346 aa).

As to quaternary structure, heterodimer of an alpha and a beta chain.

It carries out the reaction a long-chain fatty aldehyde + FMNH2 + O2 = a long-chain fatty acid + hnu + FMN + H2O + 2 H(+). Light-emitting reaction in luminous bacteria. The sequence is that of Alkanal monooxygenase alpha chain (luxA) from Photobacterium phosphoreum.